Reading from the N-terminus, the 692-residue chain is Protein arginine N-methyltransferase 7 (692 aa).

2 SAM-dependent MTase PRMT-type domains span residues 14-345 (SVEW…YCVW) and 358-684 (RVRQ…IIME). Arginine 32 is subject to Omega-N-methylarginine. Active-site residues include glutamate 144 and glutamate 153.

It belongs to the class I-like SAM-binding methyltransferase superfamily. Protein arginine N-methyltransferase family. PRMT7 subfamily. In terms of assembly, homodimer and heterodimer. Interacts with CTCFL. Interacts with PRMT5 and SNRPD3.

Its subcellular location is the cytoplasm. It is found in the cytosol. The protein localises to the nucleus. The catalysed reaction is L-arginyl-[protein] + S-adenosyl-L-methionine = N(omega)-methyl-L-arginyl-[protein] + S-adenosyl-L-homocysteine + H(+). In terms of biological role, arginine methyltransferase that can both catalyze the formation of omega-N monomethylarginine (MMA) and symmetrical dimethylarginine (sDMA), with a preference for the formation of MMA. Specifically mediates the symmetrical dimethylation of arginine residues in the small nuclear ribonucleoproteins Sm D1 (SNRPD1) and Sm D3 (SNRPD3); such methylation being required for the assembly and biogenesis of snRNP core particles. Specifically mediates the symmetric dimethylation of histone H4 'Arg-3' to form H4R3me2s. Plays a role in gene imprinting by being recruited by CTCFL at the H19 imprinted control region (ICR) and methylating histone H4 to form H4R3me2s, possibly leading to recruit DNA methyltransferases at these sites. May also play a role in embryonic stem cell (ESC) pluripotency. Also able to mediate the arginine methylation of histone H2A and myelin basic protein (MBP) in vitro; the relevance of such results is however unclear in vivo. The protein is Protein arginine N-methyltransferase 7 (PRMT7) of Homo sapiens (Human).